Reading from the N-terminus, the 1024-residue chain is NLR family CARD domain-containing protein 4 (1024 aa).

The CARD domain occupies 1–88; the sequence is MNFIKDNSRA…PLFQDLNGQS (88 aa). The segment at 95 to 298 is nucleotide-binding domain (NBD); that stretch reads EGDLDDLAQD…QFGALTAEVG (204 aa). The 314-residue stretch at 163–476 folds into the NACHT domain; it reads SPCIIEGESG…VTKGNGYLQK (314 aa). An ATP-binding site is contributed by 169–176; sequence GESGKGKS. A winged-helix domain (WHD) region spans residues 356 to 463; the sequence is SHTQTTLFHT…RLSSLLTSHE (108 aa). A Phosphoserine modification is found at Ser-533. 12 LRR repeats span residues 578 to 598, 656 to 679, 735 to 758, 762 to 785, 787 to 812, 824 to 847, 848 to 870, 878 to 902, 911 to 933, 936 to 963, 965 to 985, and 999 to 1021; these read FFQG…LFDF, KQEF…DIRY, VTNL…LTDS, LKNL…KLAE, LKNL…DYIV, EIQL…LHNL, VKLS…ALHE, LEQL…LLKH, KLGL…FFGK, LKNF…VFEN, KQLV…ALVR, and EARL…AFKL.

In terms of assembly, homooligomer; homooligomerizes to induce formation of the NLRC4 inflammasome. Homooligomerizes following activation by pathogenic proteins. Component of the NLRC4 inflammasome, at least composed of NLRC4 and caspase-1 (CASP1). Some NLRC4 inflammasomes contain PYCARD/ASC, while some others directly contact and activate CASP1. Interacts (via CARD domain) with PYCARD/ASC, pro-caspase-1 (CASP1), NOD2, BCL10 and NALP1 (NAC) by CARD-CARD interaction. Interacts with EIF2AK2/PKR. In terms of processing, phosphorylated at Ser-533 following infection of macrophages with S.typhimurium (Salmonella). Phosphorylation is essential for NLRC4 inflammasome function to promote caspase-1 activation and pyroptosis. PRKCD phosphorylates Ser-533 in vitro. In terms of tissue distribution, isoform 2 is expressed ubiquitously, although highly expressed in lung and spleen. Isoform 1 is highly expressed in lung, followed by leukocytes especially monocytes, lymph node, colon, brain, prostate, placenta, spleen, bone marrow and fetal liver. Isoform 4 is only detected in brain.

It is found in the cytoplasm. The protein resides in the cytosol. Its subcellular location is the inflammasome. In terms of biological role, key component of inflammasomes that indirectly senses specific proteins from pathogenic bacteria and fungi and responds by assembling an inflammasome complex that promotes caspase-1 activation, cytokine production and macrophage pyroptosis. The NLRC4 inflammasome is activated as part of the innate immune response to a range of intracellular bacteria. The polypeptide is NLR family CARD domain-containing protein 4 (NLRC4) (Homo sapiens (Human)).